The primary structure comprises 569 residues: Glucose-6-phosphate isomerase, cytosolic 1A (569 aa).

Residue E360 is the Proton donor of the active site. Residues H391 and K516 contribute to the active site.

The protein belongs to the GPI family. In terms of assembly, homodimer.

It localises to the cytoplasm. The enzyme catalyses alpha-D-glucose 6-phosphate = beta-D-fructose 6-phosphate. The protein operates within carbohydrate degradation; glycolysis; D-glyceraldehyde 3-phosphate and glycerone phosphate from D-glucose: step 2/4. In Clarkia lewisii (Farewell-to-spring), this protein is Glucose-6-phosphate isomerase, cytosolic 1A (PGIC1-A).